A 146-amino-acid polypeptide reads, in one-letter code: Hemoglobin subunit beta (146 aa).

Residue Val-1 is modified to N-acetylvaline. The region spanning 2–146 (HLTADEKAAV…VANALAHKYH (145 aa)) is the Globin domain. The residue at position 12 (Thr-12) is a Phosphothreonine. A Phosphoserine modification is found at Ser-44. Lys-59 carries the N6-acetyllysine modification. Heme b is bound at residue His-63. Lys-82 carries the N6-acetyllysine modification. His-92 serves as a coordination point for heme b. An S-nitrosocysteine modification is found at Cys-93. Lys-144 is subject to N6-acetyllysine.

Belongs to the globin family. In terms of assembly, heterotetramer of two alpha chains and two beta chains. In terms of tissue distribution, red blood cells.

Its function is as follows. Involved in oxygen transport from the lung to the various peripheral tissues. This chain is Hemoglobin subunit beta (HBB), found in Odobenus rosmarus divergens (Pacific walrus).